Consider the following 191-residue polypeptide: Probable DNA-directed RNA polymerase subunit delta (191 aa).

In terms of domain architecture, HTH HARE-type spans 14 to 83 (LSMIEVARAI…GENKWGLRSW (70 aa)). Residues 118-191 (DEDAIDYRDD…EDEEDEEPVL (74 aa)) are disordered.

This sequence belongs to the RpoE family. As to quaternary structure, RNAP is composed of a core of 2 alpha, a beta and a beta' subunits. The core is associated with a delta subunit and one of several sigma factors.

In terms of biological role, participates in both the initiation and recycling phases of transcription. In the presence of the delta subunit, RNAP displays an increased specificity of transcription, a decreased affinity for nucleic acids, and an increased efficiency of RNA synthesis because of enhanced recycling. The polypeptide is Probable DNA-directed RNA polymerase subunit delta (Streptococcus pyogenes serotype M18 (strain MGAS8232)).